The following is a 75-amino-acid chain: ATP synthase subunit c (75 aa).

The next 2 membrane-spanning stretches (helical) occupy residues leucine 13 to isoleucine 33 and methionine 54 to isoleucine 74.

It belongs to the ATPase C chain family. As to quaternary structure, F-type ATPases have 2 components, F(1) - the catalytic core - and F(0) - the membrane proton channel. F(1) has five subunits: alpha(3), beta(3), gamma(1), delta(1), epsilon(1). F(0) has three main subunits: a(1), b(2) and c(10-14). The alpha and beta chains form an alternating ring which encloses part of the gamma chain. F(1) is attached to F(0) by a central stalk formed by the gamma and epsilon chains, while a peripheral stalk is formed by the delta and b chains.

It localises to the cell membrane. F(1)F(0) ATP synthase produces ATP from ADP in the presence of a proton or sodium gradient. F-type ATPases consist of two structural domains, F(1) containing the extramembraneous catalytic core and F(0) containing the membrane proton channel, linked together by a central stalk and a peripheral stalk. During catalysis, ATP synthesis in the catalytic domain of F(1) is coupled via a rotary mechanism of the central stalk subunits to proton translocation. Functionally, key component of the F(0) channel; it plays a direct role in translocation across the membrane. A homomeric c-ring of between 10-14 subunits forms the central stalk rotor element with the F(1) delta and epsilon subunits. This chain is ATP synthase subunit c, found in Bifidobacterium adolescentis (strain ATCC 15703 / DSM 20083 / NCTC 11814 / E194a).